Reading from the N-terminus, the 1025-residue chain is Putative receptor-like protein kinase At3g47110 (1025 aa).

The N-terminal stretch at 1-30 (MGVPCIVMRLILVSALLVSVSLEHSDMVCA) is a signal peptide. Topologically, residues 31–653 (QTIRLTEETD…LPRRHSSVRK (623 aa)) are extracellular. N63 and N103 each carry an N-linked (GlcNAc...) asparagine glycan. LRR repeat units follow at residues 104 to 128 (LSFLRSLNLADNFFHGAIPSEVGNL), 130 to 151 (RLQYLNMSNNLFGGVIPVVLSN), 152 to 175 (CSSLSTLDLSSNHLEQGVPLEFGS), 176 to 200 (LSKLVLLSLGRNNLTGKFPASLGNL), 202 to 224 (SLQMLDFIYNQIEGEIPGDIARL), 226 to 248 (QMIFFRIALNKFNGVFPPPIYNL), 249 to 271 (SSLIFLSITGNSFSGTLRPDFGS), 273 to 297 (LPNLQILYMGINSFTGTIPETLSNI), 298 to 323 (SSLRQLDIPSNHLTGKIPLSFGRLQN), and 325 to 344 (LLLGLNNNSLGNYSSGDLDF). N135 and N151 each carry an N-linked (GlcNAc...) asparagine glycan. Residues N188 and N199 are each glycosylated (N-linked (GlcNAc...) asparagine). N-linked (GlcNAc...) asparagine glycosylation is present at N247. N-linked (GlcNAc...) asparagine glycosylation occurs at N296. N-linked (GlcNAc...) asparagine glycosylation is found at N331, N336, N350, and N374. 11 LRR repeats span residues 351 to 374 (CSQLQYLNVGFNKLGGQLPVFIAN), 376 to 400 (STQLTELSLGGNLISGSIPHGIGNL), 401 to 424 (VSLQTLDLGENLLTGKLPPSLGEL), 426 to 448 (ELRKVLLYSNGLSGEIPSSLGNI), 449 to 472 (SGLTYLYLLNNSFEGSIPSSLGSC), 473 to 496 (SYLLDLNLGTNKLNGSIPHELMEL), 498 to 520 (SLVVLNVSFNLLVGPLRQDIGKL), 521 to 544 (KFLLALDVSYNKLSGQIPQTLANC), 546 to 567 (SLEFLLLQGNSFVGPIPDIRGL), 568 to 593 (TGLRFLDLSKNNLSGTIPEYMANFSK), and 595 to 616 (QNLNLSLNNFDGAVPTEGVFRN). N-linked (GlcNAc...) asparagine glycans are attached at residues N447, N458, N486, and N503. N579, N590, N598, and N616 each carry an N-linked (GlcNAc...) asparagine glycan. Residues 654 to 674 (IITICVSAVMAALLLLCLCVV) form a helical membrane-spanning segment. The Cytoplasmic portion of the chain corresponds to 675 to 1025 (YLCWYKLRVK…RESFFRDEET (351 aa)). T716 is subject to Phosphothreonine. One can recognise a Protein kinase domain in the interval 719–1020 (FSSSNLIGSG…KLVSIRESFF (302 aa)). ATP is bound by residues 725–733 (IGSGNFGAV) and K748. Phosphotyrosine occurs at positions 798 and 843. The active-site Proton acceptor is the D856. Y904 carries the post-translational modification Phosphotyrosine.

Belongs to the protein kinase superfamily. Ser/Thr protein kinase family.

Its subcellular location is the cell membrane. The enzyme catalyses L-seryl-[protein] + ATP = O-phospho-L-seryl-[protein] + ADP + H(+). It catalyses the reaction L-threonyl-[protein] + ATP = O-phospho-L-threonyl-[protein] + ADP + H(+). In Arabidopsis thaliana (Mouse-ear cress), this protein is Putative receptor-like protein kinase At3g47110.